The following is a 302-amino-acid chain: Dehydrodolichyl diphosphate synthase 3 (302 aa).

This sequence belongs to the UPP synthase family. The cofactor is Mg(2+).

The protein operates within protein modification; protein glycosylation. Catalyzes cis-prenyl chain elongation to produce the polyprenyl backbone of dolichol, a glycosyl carrier-lipid required for the biosynthesis of several classes of glycoprotein. The sequence is that of Dehydrodolichyl diphosphate synthase 3 from Arabidopsis thaliana (Mouse-ear cress).